Here is a 911-residue protein sequence, read N- to C-terminus: Beta-galactosidase 12 (911 aa).

Residues 1-25 form the signal peptide; the sequence is MAARVAAAVAAALLAAALLLPGAAA. Glu-192 (proton donor) is an active-site residue. The Nucleophile role is filled by Glu-262. N-linked (GlcNAc...) asparagine glycans are attached at residues Asn-263, Asn-389, Asn-473, and Asn-777. One can recognise an SUEL-type lectin domain in the interval 744-831; it reads EDTSTRGTLN…ATLAVQLLLA (88 aa).

This sequence belongs to the glycosyl hydrolase 35 family.

The protein resides in the secreted. The protein localises to the extracellular space. It localises to the apoplast. It carries out the reaction Hydrolysis of terminal non-reducing beta-D-galactose residues in beta-D-galactosides.. The sequence is that of Beta-galactosidase 12 from Oryza sativa subsp. japonica (Rice).